We begin with the raw amino-acid sequence, 659 residues long: Exoribonuclease 2 (659 aa).

Positions 189 to 531 (RKDLTALHFV…NHRLIKACIA (343 aa)) constitute an RNB domain. An S1 motif domain is found at 576-658 (KPEFQAEVQD…ETRSLIGNLV (83 aa)).

The protein belongs to the RNR ribonuclease family. RNase II subfamily.

Its subcellular location is the cytoplasm. The catalysed reaction is Exonucleolytic cleavage in the 3'- to 5'-direction to yield nucleoside 5'-phosphates.. Its function is as follows. Involved in mRNA degradation. Hydrolyzes single-stranded polyribonucleotides processively in the 3' to 5' direction. The chain is Exoribonuclease 2 from Actinobacillus succinogenes (strain ATCC 55618 / DSM 22257 / CCUG 43843 / 130Z).